Reading from the N-terminus, the 376-residue chain is Polycomb group protein FIE1 (376 aa).

WD repeat units lie at residues 85–127 (DKDE…LLKT), 130–170 (GHGD…CILI), 176–216 (GHRN…PYVE), 242–279 (VHSN…QSPG), 291–332 (VPEC…PVLT), and 339–376 (QCKS…HPKA).

It belongs to the WD repeat ESC family. Interacts with EZ1. Component of the polycomb repressive complex 2 (PRC2), composed of the core PRC2 components EMF2B, EZ1 and CLF. PRC2 methylates 'Lys-27' residues of histone H3 (H3K27me3), leading to transcriptional repression of the affected target gene. As to expression, widely expressed.

Its function is as follows. Polycomb group (PcG) protein. PcG proteins act by forming multiprotein complexes, which are required to maintain the transcriptionally repressive state of homeotic genes throughout development. PcG proteins are not required to initiate repression, but to maintain it during later stages of development. They act via the methylation of histones, rendering chromatin heritably changed in its expressibility. Involved in the regulation of seed endosperm development, grain filling and seed dormancy. FIE2-containing PcG complex in seed endosperm regulates the expression of various transcription factors by trimethylation on histone H3 'Lys-27' (H3K27me3) of target genes. Involved in the overall expression regulation of a large number of nutrient metabolism genes. Involved in the regulation of seed endosperm development. Involved in the regulation of vegetative development, particularly in stem cell maintenance in the root system, where it maintains the suppression of key differentiation regulators. This is Polycomb group protein FIE1 from Oryza sativa subsp. japonica (Rice).